A 285-amino-acid chain; its full sequence is Kanamycin B dioxygenase (285 aa).

It belongs to the PhyH family. It depends on Fe cation as a cofactor.

The catalysed reaction is kanamycin B + 2-oxoglutarate + O2 = 2'-dehydrokanamycin A + succinate + NH4(+) + CO2. The protein operates within antibiotic biosynthesis; kanamycin biosynthesis. Functionally, mediates the conversion of kanamycin B into 2'-dehydrokanamycin A during the transformation of kanamycin B to kanamycin A. The sequence is that of Kanamycin B dioxygenase (kanJ) from Streptomyces kanamyceticus.